We begin with the raw amino-acid sequence, 333 residues long: Anthranilate phosphoribosyltransferase (333 aa).

5-phospho-alpha-D-ribose 1-diphosphate-binding positions include G80, 83–84 (GD), T88, 90–93 (NLST), 108–116 (KHGNRSASG), and S120. G80 serves as a coordination point for anthranilate. S92 is a binding site for Mg(2+). An anthranilate-binding site is contributed by N111. R166 contributes to the anthranilate binding site. Mg(2+) is bound by residues D224 and E225.

It belongs to the anthranilate phosphoribosyltransferase family. Homodimer. Requires Mg(2+) as cofactor.

The catalysed reaction is N-(5-phospho-beta-D-ribosyl)anthranilate + diphosphate = 5-phospho-alpha-D-ribose 1-diphosphate + anthranilate. The protein operates within amino-acid biosynthesis; L-tryptophan biosynthesis; L-tryptophan from chorismate: step 2/5. Catalyzes the transfer of the phosphoribosyl group of 5-phosphorylribose-1-pyrophosphate (PRPP) to anthranilate to yield N-(5'-phosphoribosyl)-anthranilate (PRA). This chain is Anthranilate phosphoribosyltransferase, found in Pyrobaculum aerophilum (strain ATCC 51768 / DSM 7523 / JCM 9630 / CIP 104966 / NBRC 100827 / IM2).